We begin with the raw amino-acid sequence, 343 residues long: Large ribosomal subunit protein uL3 (343 aa).

2 disordered regions span residues 1 to 31 (MGHR…TPRS) and 238 to 262 (KGSR…PGQM).

Belongs to the universal ribosomal protein uL3 family. Part of the 50S ribosomal subunit. Forms a cluster with proteins L14 and L24e.

Functionally, one of the primary rRNA binding proteins, it binds directly near the 3'-end of the 23S rRNA, where it nucleates assembly of the 50S subunit. The chain is Large ribosomal subunit protein uL3 from Sulfurisphaera tokodaii (strain DSM 16993 / JCM 10545 / NBRC 100140 / 7) (Sulfolobus tokodaii).